The following is a 526-amino-acid chain: ATP synthase subunit alpha (526 aa).

171–178 (GDRQTGKT) contributes to the ATP binding site.

Belongs to the ATPase alpha/beta chains family. As to quaternary structure, F-type ATPases have 2 components, CF(1) - the catalytic core - and CF(0) - the membrane proton channel. CF(1) has five subunits: alpha(3), beta(3), gamma(1), delta(1), epsilon(1). CF(0) has three main subunits: a(1), b(2) and c(9-12). The alpha and beta chains form an alternating ring which encloses part of the gamma chain. CF(1) is attached to CF(0) by a central stalk formed by the gamma and epsilon chains, while a peripheral stalk is formed by the delta and b chains.

The protein localises to the cell inner membrane. The catalysed reaction is ATP + H2O + 4 H(+)(in) = ADP + phosphate + 5 H(+)(out). Produces ATP from ADP in the presence of a proton gradient across the membrane. The alpha chain is a regulatory subunit. The sequence is that of ATP synthase subunit alpha from Cytophaga hutchinsonii (strain ATCC 33406 / DSM 1761 / CIP 103989 / NBRC 15051 / NCIMB 9469 / D465).